A 304-amino-acid chain; its full sequence is Killer cell immunoglobulin-like receptor 2DS4 (304 aa).

The signal sequence occupies residues 1 to 21 (MSLMVIIMACVGFFLLQGAWP). The Extracellular segment spans residues 22–245 (QEGVHRKPSF…SKTGNPRHLH (224 aa)). Ig-like C2-type domains are found at residues 42-107 (EETV…VPHS) and 142-205 (GENV…FRDA). An intrachain disulfide couples C49 to C100. N67, N84, N144, N178, and N211 each carry an N-linked (GlcNAc...) asparagine glycan. C149 and C198 are disulfide-bonded. The interval 220–239 (VTGNPSNSWPSPTEPSSKTG) is disordered. A helical transmembrane segment spans residues 246–265 (VLIGTSVVKIPFTILLFFLL). The Cytoplasmic segment spans residues 266 to 304 (HRWCSDKKNAAVMDQEPAGNRTVNSEDSDEQDHQEVSYA). A disordered region spans residues 280-304 (QEPAGNRTVNSEDSDEQDHQEVSYA).

Belongs to the immunoglobulin superfamily. As to quaternary structure, interacts with HLA-F; this interaction is direct.

The protein resides in the cell membrane. Functionally, receptor on natural killer (NK) cells for HLA-C alleles. Does not inhibit the activity of NK cells. The polypeptide is Killer cell immunoglobulin-like receptor 2DS4 (Homo sapiens (Human)).